Consider the following 270-residue polypeptide: Phosphatidylinositol transfer protein alpha isoform (270 aa).

The a 1,2-diacyl-sn-glycero-3-phospho-(1D-myo-inositol) site is built by Thr58, Lys60, Glu85, Asn89, Thr96, and Lys194. Lys215 is subject to N6-acetyllysine.

It belongs to the PtdIns transfer protein family. PI transfer class I subfamily. Post-translationally, phosphorylated by PKC in a calcium and phosphatidylserine-dependent manner.

The protein localises to the cytoplasm. It is found in the nucleus. The catalysed reaction is a 1,2-diacyl-sn-glycero-3-phosphocholine(in) = a 1,2-diacyl-sn-glycero-3-phosphocholine(out). It carries out the reaction a 1,2-diacyl-sn-glycero-3-phospho-(1D-myo-inositol)(in) = a 1,2-diacyl-sn-glycero-3-phospho-(1D-myo-inositol)(out). In terms of biological role, catalyzes the transfer of phosphatidylinositol (PI) and phosphatidylcholine (PC) between membranes. Shows a preference for PI and PC containing shorter saturated or monosaturated acyl chains at the sn-1 and sn-2 positions. Preference order for PC is C16:1 &gt; C16:0 &gt; C18:1 &gt; C18:0 &gt; C20:4 and for PI is C16:1 &gt; C16:0 &gt; C18:1 &gt; C18:0 &gt; C20:4 &gt; C20:3. The chain is Phosphatidylinositol transfer protein alpha isoform (PITPNA) from Bos taurus (Bovine).